The sequence spans 170 residues: NADH-quinone oxidoreductase subunit B (170 aa).

[4Fe-4S] cluster is bound by residues C37, C38, C102, and C131.

It belongs to the complex I 20 kDa subunit family. In terms of assembly, NDH-1 is composed of 14 different subunits. Subunits NuoB, C, D, E, F, and G constitute the peripheral sector of the complex. [4Fe-4S] cluster is required as a cofactor.

The protein resides in the cell inner membrane. The enzyme catalyses a quinone + NADH + 5 H(+)(in) = a quinol + NAD(+) + 4 H(+)(out). In terms of biological role, NDH-1 shuttles electrons from NADH, via FMN and iron-sulfur (Fe-S) centers, to quinones in the respiratory chain. The immediate electron acceptor for the enzyme in this species is believed to be ubiquinone. Couples the redox reaction to proton translocation (for every two electrons transferred, four hydrogen ions are translocated across the cytoplasmic membrane), and thus conserves the redox energy in a proton gradient. The protein is NADH-quinone oxidoreductase subunit B of Geobacter sp. (strain M21).